The chain runs to 629 residues: MNSNTDLHHSDDQDFSEFLNEYYLQSNSQSIEPEASYEDGEMEAEWLVSAGYPELTKPFEQGLEVSKKDLEPILTTLSKPHAEAIVQLVRTLNKTVRVRTKSRPKRKPDIRDVFREFDEQGTVTRSRSATPDSLDSLQIDEAWTNNSLPTFVNVYEKNTETAIQCVEQSNEIYLKQNLRRTPSAPPKSGTYADIFRGSQVRCDIPLYSADGVELLGYSRIGTIQFPRNRSVSDPFCSIGRSKESRSENDARSQKKKSSEVLSASENECGRLLPMPYNVLSFESICRDSSSLDSCEVLDTCDIPSTLFTDVVLISETDMKRLQTILWLELATIFDRNKVSLDKRKPFKRRRKEEGNLFGVSINALIRRDQQVTGTDSSLVPLFLEKLIGELLRRGSREEGLLRIGGHKQKTELLYNELESTFYQNPDNLDNLFRTATVHELSSLLKRWLRELPQPLLTNELIQLFYQCHTLPSIDQMNALSILCHLLPPENRNTLRSLLSFFNIIINLKDINKMNVHNVATIMAPSMFPPRYIHPSDNNSIAEQVRMAAQCCRLTNILILRGEKLFQVPNNLIVESQKTMMGKKGWHRHRNSNEITAKPSGKASNVGVGHDSTVINKYSTNLKHLHPFVI.

Positions Pro-185–Cys-294 are required for interaction with Moe. Residues Ser-237–Leu-261 form a disordered region. A compositionally biased stretch (basic and acidic residues) spans Arg-240 to Ser-258. Residues Val-359–Phe-565 enclose the Rho-GAP domain.

Interacts with Moe (via FERM domain).

It is found in the cytoplasm. It localises to the cell membrane. Its subcellular location is the cell cortex. The protein localises to the cell junction. GTPase-activating protein (GAP) for Rho1; functions with the ERM protein Moe to regulate Rho1 and control proliferation in the developing epithelium. Recruited by Moe to the cell cortex where it negatively regulates Rho1 activity. Can also promote cell proliferation independently of its GAP activity, perhaps by acting with Arf6 to positively regulate Rac1. The chain is Rho GTPase-activating protein conundrum from Drosophila melanogaster (Fruit fly).